Reading from the N-terminus, the 396-residue chain is tRNA (guanine-N(7)-)-methyltransferase non-catalytic subunit wdr4 (396 aa).

4 WD repeats span residues 52 to 91, 94 to 133, 137 to 178, and 180 to 220; these read HGSD…EKIS, WVSR…EQGR, GHLS…MSFC, and GHTE…EVHS.

It belongs to the WD repeat TRM82 family. In terms of assembly, non-catalytic component of the METTL1-WDR4 complex, composed of mettl1 and wdr4.

It localises to the nucleus. It participates in tRNA modification; N(7)-methylguanine-tRNA biosynthesis. Non-catalytic component of the METTL1-WDR4 methyltransferase complex required for the formation of N(7)-methylguanine in a subset of RNA species, such as tRNAs, mRNAs and microRNAs (miRNAs). In the METTL1-WDR4 methyltransferase complex, wdr4 acts as a scaffold for tRNA-binding. Required for the formation of N(7)-methylguanine at position 46 (m7G46) in a large subset of tRNAs that contain the 5'-RAGGU-3' motif within the variable loop. M7G46 interacts with C13-G22 in the D-loop to stabilize tRNA tertiary structure and protect tRNAs from decay. Also required for the formation of N(7)-methylguanine at internal sites in a subset of mRNAs. Also required for methylation of a specific subset of miRNAs. This chain is tRNA (guanine-N(7)-)-methyltransferase non-catalytic subunit wdr4 (wdr4), found in Xenopus laevis (African clawed frog).